Consider the following 243-residue polypeptide: 2-C-methyl-D-erythritol 4-phosphate cytidylyltransferase (243 aa).

It belongs to the IspD/TarI cytidylyltransferase family. IspD subfamily. As to quaternary structure, homodimer.

The enzyme catalyses 2-C-methyl-D-erythritol 4-phosphate + CTP + H(+) = 4-CDP-2-C-methyl-D-erythritol + diphosphate. Its pathway is isoprenoid biosynthesis; isopentenyl diphosphate biosynthesis via DXP pathway; isopentenyl diphosphate from 1-deoxy-D-xylulose 5-phosphate: step 2/6. In terms of biological role, catalyzes the formation of 4-diphosphocytidyl-2-C-methyl-D-erythritol from CTP and 2-C-methyl-D-erythritol 4-phosphate (MEP). This Photorhabdus laumondii subsp. laumondii (strain DSM 15139 / CIP 105565 / TT01) (Photorhabdus luminescens subsp. laumondii) protein is 2-C-methyl-D-erythritol 4-phosphate cytidylyltransferase.